An 89-amino-acid chain; its full sequence is Small ribosomal subunit protein uS17 (89 aa).

The protein belongs to the universal ribosomal protein uS17 family. Part of the 30S ribosomal subunit.

One of the primary rRNA binding proteins, it binds specifically to the 5'-end of 16S ribosomal RNA. This Variovorax paradoxus (strain S110) protein is Small ribosomal subunit protein uS17.